Here is a 514-residue protein sequence, read N- to C-terminus: 2,3-bisphosphoglycerate-independent phosphoglycerate mutase (514 aa).

Mn(2+)-binding residues include Asp14 and Ser64. The active-site Phosphoserine intermediate is Ser64. Substrate contacts are provided by residues His125, 155 to 156 (RD), Arg187, Arg193, 263 to 266 (RADR), and Lys337. Positions 404, 408, 445, 446, and 464 each coordinate Mn(2+).

The protein belongs to the BPG-independent phosphoglycerate mutase family. In terms of assembly, monomer. The cofactor is Mn(2+).

It carries out the reaction (2R)-2-phosphoglycerate = (2R)-3-phosphoglycerate. It participates in carbohydrate degradation; glycolysis; pyruvate from D-glyceraldehyde 3-phosphate: step 3/5. Functionally, catalyzes the interconversion of 2-phosphoglycerate and 3-phosphoglycerate. This is 2,3-bisphosphoglycerate-independent phosphoglycerate mutase from Serratia proteamaculans (strain 568).